A 140-amino-acid chain; its full sequence is uncharacterized protein (140 aa).

This is an uncharacterized protein from Neurospora crassa (strain ATCC 24698 / 74-OR23-1A / CBS 708.71 / DSM 1257 / FGSC 987).